Here is a 95-residue protein sequence, read N- to C-terminus: Co-chaperonin GroES (95 aa).

It belongs to the GroES chaperonin family. As to quaternary structure, heptamer of 7 subunits arranged in a ring. Interacts with the chaperonin GroEL.

The protein resides in the cytoplasm. Its function is as follows. Together with the chaperonin GroEL, plays an essential role in assisting protein folding. The GroEL-GroES system forms a nano-cage that allows encapsulation of the non-native substrate proteins and provides a physical environment optimized to promote and accelerate protein folding. GroES binds to the apical surface of the GroEL ring, thereby capping the opening of the GroEL channel. In Chlorobium phaeobacteroides (strain DSM 266 / SMG 266 / 2430), this protein is Co-chaperonin GroES.